A 72-amino-acid chain; its full sequence is UPF0426 protein asl4034 (72 aa).

Belongs to the UPF0426 family.

In Nostoc sp. (strain PCC 7120 / SAG 25.82 / UTEX 2576), this protein is UPF0426 protein asl4034.